A 319-amino-acid chain; its full sequence is Ribose-phosphate pyrophosphokinase (319 aa).

ATP is bound by residues 41–43 (NGE) and 100–101 (RQ). Positions 134 and 175 each coordinate Mg(2+). Lys-198 is a catalytic residue. D-ribose 5-phosphate contacts are provided by residues Arg-200, Asp-224, and 228 to 232 (DTAGS).

Belongs to the ribose-phosphate pyrophosphokinase family. Class I subfamily. Homohexamer. The cofactor is Mg(2+).

It localises to the cytoplasm. The catalysed reaction is D-ribose 5-phosphate + ATP = 5-phospho-alpha-D-ribose 1-diphosphate + AMP + H(+). Its pathway is metabolic intermediate biosynthesis; 5-phospho-alpha-D-ribose 1-diphosphate biosynthesis; 5-phospho-alpha-D-ribose 1-diphosphate from D-ribose 5-phosphate (route I): step 1/1. Involved in the biosynthesis of the central metabolite phospho-alpha-D-ribosyl-1-pyrophosphate (PRPP) via the transfer of pyrophosphoryl group from ATP to 1-hydroxyl of ribose-5-phosphate (Rib-5-P). The chain is Ribose-phosphate pyrophosphokinase from Clostridium acetobutylicum (strain ATCC 824 / DSM 792 / JCM 1419 / IAM 19013 / LMG 5710 / NBRC 13948 / NRRL B-527 / VKM B-1787 / 2291 / W).